A 776-amino-acid polypeptide reads, in one-letter code: Venom dipeptidyl peptidase 4 (776 aa).

An N-terminal signal peptide occupies residues 1-19; the sequence is MVPLRSFVLLNGLFFVLLA. 3 N-linked (GlcNAc...) asparagine glycosylation sites follow: Asn44, Asn66, and Asn329. 2 disulfides stabilise this stretch: Cys449/Cys452 and Cys462/Cys480. Residues Asn504 and Asn577 are each glycosylated (N-linked (GlcNAc...) asparagine). Ser638 functions as the Charge relay system in the catalytic mechanism. Cys658 and Cys769 are oxidised to a cystine. An N-linked (GlcNAc...) asparagine glycan is attached at Asn693. Catalysis depends on charge relay system residues Asp717 and His749.

This sequence belongs to the peptidase S9B family. DPPIV subfamily. Expressed by the venom gland.

It is found in the secreted. The enzyme catalyses Release of an N-terminal dipeptide, Xaa-Yaa-|-Zaa-, from a polypeptide, preferentially when Yaa is Pro, provided Zaa is neither Pro nor hydroxyproline.. Functionally, venom dipeptidyl-peptidase which removes N-terminal dipeptides sequentially from polypeptides having unsubstituted N-termini provided that the penultimate residue is proline. May process venom proteins into their active forms and/or modulate the chemotactic activity of immune cells after the insect sting. In Vespa velutina (Asian yellow-legged hornet), this protein is Venom dipeptidyl peptidase 4.